The primary structure comprises 472 residues: Chromosomal replication initiator protein DnaA (472 aa).

The interval 1 to 73 is domain I, interacts with DnaA modulators; that stretch reads MSNMEQDRWS…LSCWQAELPE (73 aa). Residues 73–128 are domain II; sequence EVNRVDLTVRSPVRCATPAKEVPAPVESRRDEQRPSAERSNGATPVSANHDALGGS. Positions 90-124 are disordered; it reads PAKEVPAPVESRRDEQRPSAERSNGATPVSANHDA. Over residues 99–109 the composition is skewed to basic and acidic residues; the sequence is ESRRDEQRPSA. Residues 110–119 are compositionally biased toward polar residues; the sequence is ERSNGATPVS. Residues 129–351 are domain III, AAA+ region; that stretch reads PLDPRLTFAS…GAINRLLAHS (223 aa). Residues Gly-176, Gly-178, Lys-179, and Thr-180 each contribute to the ATP site. The tract at residues 352–472 is domain IV, binds dsDNA; that stretch reads KLNNQPVTLE…VESLKRQLQE (121 aa).

Belongs to the DnaA family. As to quaternary structure, oligomerizes as a right-handed, spiral filament on DNA at oriC.

The protein localises to the cytoplasm. Plays an essential role in the initiation and regulation of chromosomal replication. ATP-DnaA binds to the origin of replication (oriC) to initiate formation of the DNA replication initiation complex once per cell cycle. Binds the DnaA box (a 9 base pair repeat at the origin) and separates the double-stranded (ds)DNA. Forms a right-handed helical filament on oriC DNA; dsDNA binds to the exterior of the filament while single-stranded (ss)DNA is stabiized in the filament's interior. The ATP-DnaA-oriC complex binds and stabilizes one strand of the AT-rich DNA unwinding element (DUE), permitting loading of DNA polymerase. After initiation quickly degrades to an ADP-DnaA complex that is not apt for DNA replication. Binds acidic phospholipids. This is Chromosomal replication initiator protein DnaA from Rhodopseudomonas palustris (strain ATCC BAA-98 / CGA009).